Reading from the N-terminus, the 513-residue chain is Activin receptor type-2A (513 aa).

A signal peptide spans 1 to 19 (MGAAAKLAFAVFLISCSSG). The Extracellular segment spans residues 20-135 (AILGRSETQE…TSNPVTPKPP (116 aa)). 5 cysteine pairs are disulfide-bonded: Cys-30-Cys-60, Cys-50-Cys-78, Cys-85-Cys-104, Cys-91-Cys-103, and Cys-105-Cys-110. N-linked (GlcNAc...) asparagine glycosylation is found at Asn-43 and Asn-66. The helical transmembrane segment at 136 to 161 (YYNILLYSLVPLMLIAGIVICAFWVY) threads the bilayer. The Cytoplasmic portion of the chain corresponds to 162 to 513 (RHHKMAYPPV…VDFPPKESSL (352 aa)). The Protein kinase domain maps to 192–485 (LQLLEVKARG…GERITQMQRL (294 aa)). ATP contacts are provided by residues 198 to 206 (KARGRFGCV) and Lys-219. Asp-322 functions as the Proton acceptor in the catalytic mechanism.

The protein belongs to the protein kinase superfamily. TKL Ser/Thr protein kinase family. TGFB receptor subfamily. In terms of assembly, part of a complex consisting of MAGI2/ARIP1, ACVR2A, ACVR1B and SMAD3. Interacts with MAGI2/ARIP1. Interacts with type I receptor ACVR1. Interacts with BMP7. Interacts with TSC22D1/TSC-22. Interacts with activin A/INHBA. The cofactor is Mg(2+). Mn(2+) serves as cofactor.

The protein resides in the cell membrane. It catalyses the reaction L-threonyl-[receptor-protein] + ATP = O-phospho-L-threonyl-[receptor-protein] + ADP + H(+). The catalysed reaction is L-seryl-[receptor-protein] + ATP = O-phospho-L-seryl-[receptor-protein] + ADP + H(+). In terms of biological role, on ligand binding, forms a receptor complex consisting of two type II and two type I transmembrane serine/threonine kinases. Type II receptors phosphorylate and activate type I receptors which autophosphorylate, then bind and activate SMAD transcriptional regulators. Receptor for activin A, activin B and inhibin A. Mediates induction of adipogenesis by GDF6. The chain is Activin receptor type-2A (ACVR2A) from Bos taurus (Bovine).